The primary structure comprises 491 residues: UDP-N-acetylmuramate--L-alanine ligase (491 aa).

126 to 132 (GTHGKTT) contributes to the ATP binding site.

Belongs to the MurCDEF family.

The protein localises to the cytoplasm. It catalyses the reaction UDP-N-acetyl-alpha-D-muramate + L-alanine + ATP = UDP-N-acetyl-alpha-D-muramoyl-L-alanine + ADP + phosphate + H(+). It participates in cell wall biogenesis; peptidoglycan biosynthesis. Cell wall formation. The sequence is that of UDP-N-acetylmuramate--L-alanine ligase from Shigella dysenteriae serotype 1 (strain Sd197).